A 618-amino-acid chain; its full sequence is 1-deoxy-D-xylulose-5-phosphate synthase (618 aa).

Thiamine diphosphate contacts are provided by residues H72 and 113 to 115 (GHA). D144 contacts Mg(2+). Thiamine diphosphate is bound by residues 145 to 146 (GA), N173, H284, and E359. N173 serves as a coordination point for Mg(2+).

The protein belongs to the transketolase family. DXPS subfamily. As to quaternary structure, homodimer. Mg(2+) is required as a cofactor. Requires thiamine diphosphate as cofactor.

The enzyme catalyses D-glyceraldehyde 3-phosphate + pyruvate + H(+) = 1-deoxy-D-xylulose 5-phosphate + CO2. The protein operates within metabolic intermediate biosynthesis; 1-deoxy-D-xylulose 5-phosphate biosynthesis; 1-deoxy-D-xylulose 5-phosphate from D-glyceraldehyde 3-phosphate and pyruvate: step 1/1. Catalyzes the acyloin condensation reaction between C atoms 2 and 3 of pyruvate and glyceraldehyde 3-phosphate to yield 1-deoxy-D-xylulose-5-phosphate (DXP). This Dictyoglomus thermophilum (strain ATCC 35947 / DSM 3960 / H-6-12) protein is 1-deoxy-D-xylulose-5-phosphate synthase.